A 473-amino-acid chain; its full sequence is Azaphilone pigments biosynthesis cluster protein L (473 aa).

The N-terminal stretch at 1–23 (MAELSIASGIVGLLSLGIQVTQS) is a signal peptide. ANK repeat units lie at residues 403-432 (EYGNALQAASSGGHWKVVQMLLDQGADVNA) and 436-465 (RYGNALHAASSRGHKKVVQMLLDHGANVST). N-linked (GlcNAc...) asparagine glycosylation occurs at asparagine 462.

Functionally, part of the gene cluster that mediates the biosynthesis of azaphilone pigments (MonAzPs), a complex mixture of compounds with a common azaphilone skeleton very widely used as food colorants. Seems not to play a direct role in the biosynthesis but might have a regulatorx function. This is Azaphilone pigments biosynthesis cluster protein L from Monascus ruber (Mold).